A 1035-amino-acid polypeptide reads, in one-letter code: Potassium-transporting ATPase alpha chain 1 (1035 aa).

The tract at residues 1–41 is disordered; that stretch reads MGKADNYELYSVELGPGPGGDMAAKMSKKKKAGGGGGKRKE. Topologically, residues 1 to 98 are cytoplasmic; that stretch reads MGKADNYELY…NALRPPRGTP (98 aa). A phosphotyrosine mark is found at Tyr7 and Tyr10. Basic residues predominate over residues 26 to 40; it reads MSKKKKAGGGGGKRK. Residue Ser27 is modified to Phosphoserine. Residues 99–119 form a helical membrane-spanning segment; sequence EYVKFARQLAGGLQCLMWVAA. Topologically, residues 120 to 142 are lumenal; the sequence is AICLIAFAIQASEGDLTTDDNLY. Residues 143 to 163 traverse the membrane as a helical segment; that stretch reads LALALIAVVVVTGCFGYYQEF. Over 164–299 the chain is Cytoplasmic; the sequence is KSTNIIASFK…NEKTPIAIEI (136 aa). Residues 300–319 form a helical membrane-spanning segment; that stretch reads EHFVDIIAGLAILFGATFFV. The Lumenal portion of the chain corresponds to 320 to 331; the sequence is VAMCIGYTFLRA. The helical transmembrane segment at 332-349 threads the bilayer; the sequence is MVFFMAIVVAYVPEGLLA. K(+)-binding residues include Val340, Ala341, Val343, and Glu345. Topologically, residues 350-783 are cytoplasmic; it reads TVTVCLSLTA…EQGRLIFDNL (434 aa). Residue Asp387 is the 4-aspartylphosphate intermediate of the active site. Residues Asp387 and Thr389 each contribute to the Mg(2+) site. Residues Ser463 and Ser601 each carry the phosphoserine modification. Mg(2+)-binding residues include Asp728 and Asp732. The helical transmembrane segment at 784–803 threads the bilayer; sequence KKSIAYTLTKNIPELTPYLI. Glu797 serves as a coordination point for K(+). The Lumenal segment spans residues 804–813; that stretch reads YITVSVPLPL. A helical transmembrane segment spans residues 814–834; the sequence is GCITILFIELCTDIFPSVSLA. Glu822 contacts K(+). Topologically, residues 835-854 are cytoplasmic; the sequence is YEKAESDIMHLRPRNPKRDR. At Ser840 the chain carries Phosphoserine. Residues 855–877 form a helical membrane-spanning segment; it reads LVNEPLAAYSYFQIGAIQSFAGF. Topologically, residues 878-929 are lumenal; the sequence is TDYFTAMAQEGWFPLLCVGLRPQWEDHHLQDLQDSYGQEWTFGQRLYQQYTC. A helical transmembrane segment spans residues 930–949; it reads YTVFFISIEMCQIADVLIRK. Topologically, residues 950–963 are cytoplasmic; the sequence is TRRLSAFQQGFFRN. At Ser954 the chain carries Phosphoserine; by PKA. A helical transmembrane segment spans residues 964 to 982; that stretch reads RILVIAIVFQVCIGCFLCY. The Lumenal segment spans residues 983–997; the sequence is CPGMPNIFNFMPIRF. A helical membrane pass occupies residues 998-1018; sequence QWWLVPMPFGLLIFVYDEIRK. Residues 1019-1035 are Cytoplasmic-facing; it reads LGVRCCPGSWWDQELYY.

It belongs to the cation transport ATPase (P-type) (TC 3.A.3) family. Type IIC subfamily. In terms of assembly, the gastric H(+)/K(+) ATPase pump is composed of the catalytic alpha subunit ATP4A and the regulatory beta subunit ATP4B. Interacts (via the P-domain) with ATP4B (via N-terminus); this interaction stabilizes the lumenal-open E2 conformation state and prevents the reverse reaction of the transport cycle.

The protein localises to the apical cell membrane. The protein resides in the cell membrane. The enzyme catalyses K(+)(out) + ATP + H2O + H(+)(in) = K(+)(in) + ADP + phosphate + 2 H(+)(out). Its function is as follows. The catalytic subunit of the gastric H(+)/K(+) ATPase pump which transports H(+) ions in exchange for K(+) ions across the apical membrane of parietal cells. Uses ATP as an energy source to pump H(+) ions to the gastric lumen while transporting K(+) ion from the lumen into the cell. Remarkably generates a million-fold proton gradient across the gastric parietal cell membrane, acidifying the gastric juice down to pH 1. Within a transport cycle, the transfer of a H(+) ion across the membrane is coupled to ATP hydrolysis and is associated with a transient phosphorylation that shifts the pump conformation from inward-facing (E1) to outward-facing state (E2). The release of the H(+) ion in the stomach lumen is followed by binding of K(+) ion converting the pump conformation back to the E1 state. This chain is Potassium-transporting ATPase alpha chain 1 (ATP4A), found in Oryctolagus cuniculus (Rabbit).